Reading from the N-terminus, the 245-residue chain is 1-(5-phosphoribosyl)-5-[(5-phosphoribosylamino)methylideneamino] imidazole-4-carboxamide isomerase (245 aa).

The Proton acceptor role is filled by Asp-8. Asp-129 functions as the Proton donor in the catalytic mechanism.

It belongs to the HisA/HisF family.

The protein localises to the cytoplasm. It catalyses the reaction 1-(5-phospho-beta-D-ribosyl)-5-[(5-phospho-beta-D-ribosylamino)methylideneamino]imidazole-4-carboxamide = 5-[(5-phospho-1-deoxy-D-ribulos-1-ylimino)methylamino]-1-(5-phospho-beta-D-ribosyl)imidazole-4-carboxamide. It functions in the pathway amino-acid biosynthesis; L-histidine biosynthesis; L-histidine from 5-phospho-alpha-D-ribose 1-diphosphate: step 4/9. The polypeptide is 1-(5-phosphoribosyl)-5-[(5-phosphoribosylamino)methylideneamino] imidazole-4-carboxamide isomerase (Rhodopseudomonas palustris (strain BisB18)).